The following is a 20-amino-acid chain: Brevinin-1DYc (20 aa).

The cysteines at positions 14 and 20 are disulfide-linked.

Expressed by the skin glands.

Its subcellular location is the secreted. Functionally, antimicrobial peptide. Has low activity against the Gram-positive bacterium S.aureus and the Gram-negative bacterium E.coli (MIC&lt;15 uM). Has a strong hemolytic activity. This chain is Brevinin-1DYc, found in Rana dybowskii (Dybovsky's frog).